The chain runs to 652 residues: ATP-dependent zinc metalloprotease FtsH (652 aa).

Residues 1–11 (MKKQNNGLIKN) are Cytoplasmic-facing. The chain crosses the membrane as a helical span at residues 12-32 (PFLWLLFIFFLVTGFQYFYSG). The Extracellular segment spans residues 33 to 131 (NNSGGSQQIN…EVTVKHESSS (99 aa)). The chain crosses the membrane as a helical span at residues 132–152 (GIWINLLVSIVPFGILFFFLF). At 153-652 (SMMGNMGGGN…EVKSKMNDEK (500 aa)) the chain is on the cytoplasmic side. 227 to 234 (GPPGTGKT) contacts ATP. Residue His-449 participates in Zn(2+) binding. Glu-450 is an active-site residue. 2 residues coordinate Zn(2+): His-453 and Asp-525. The tract at residues 628–652 (MPEAVEEESHALSYDEVKSKMNDEK) is disordered. Residues 634–652 (EESHALSYDEVKSKMNDEK) are compositionally biased toward basic and acidic residues.

The protein in the central section; belongs to the AAA ATPase family. This sequence in the C-terminal section; belongs to the peptidase M41 family. In terms of assembly, homohexamer. The cofactor is Zn(2+).

Its subcellular location is the cell membrane. Acts as a processive, ATP-dependent zinc metallopeptidase for both cytoplasmic and membrane proteins. Plays a role in the quality control of integral membrane proteins. The protein is ATP-dependent zinc metalloprotease FtsH of Streptococcus pneumoniae (strain ATCC BAA-255 / R6).